The sequence spans 360 residues: 3-dehydroquinate synthase (360 aa).

NAD(+)-binding positions include 72-77, 106-110, 130-131, lysine 143, and lysine 152; these read DGEEYK, GVIGD, and TT. Residues glutamate 185, histidine 248, and histidine 265 each coordinate Zn(2+).

Belongs to the sugar phosphate cyclases superfamily. Dehydroquinate synthase family. Co(2+) is required as a cofactor. Requires Zn(2+) as cofactor. It depends on NAD(+) as a cofactor.

It is found in the cytoplasm. The enzyme catalyses 7-phospho-2-dehydro-3-deoxy-D-arabino-heptonate = 3-dehydroquinate + phosphate. It participates in metabolic intermediate biosynthesis; chorismate biosynthesis; chorismate from D-erythrose 4-phosphate and phosphoenolpyruvate: step 2/7. In terms of biological role, catalyzes the conversion of 3-deoxy-D-arabino-heptulosonate 7-phosphate (DAHP) to dehydroquinate (DHQ). The protein is 3-dehydroquinate synthase of Geotalea uraniireducens (strain Rf4) (Geobacter uraniireducens).